Consider the following 256-residue polypeptide: Small ribosomal subunit protein uS2 (256 aa).

Positions 229-256 (PVDDNGDYGDFDEAIDEYADETDASESE) are disordered. The span at 232–256 (DNGDYGDFDEAIDEYADETDASESE) shows a compositional bias: acidic residues.

The protein belongs to the universal ribosomal protein uS2 family.

This is Small ribosomal subunit protein uS2 from Picosynechococcus sp. (strain ATCC 27264 / PCC 7002 / PR-6) (Agmenellum quadruplicatum).